A 246-amino-acid chain; its full sequence is UPF0309 protein ABC0887 (246 aa).

Residues 33–212 (MVHAIKEGKS…VLKMIEQLEE (180 aa)) enclose the SIS domain.

The protein belongs to the UPF0309 family.

This Shouchella clausii (strain KSM-K16) (Alkalihalobacillus clausii) protein is UPF0309 protein ABC0887.